The chain runs to 119 residues: NADH-quinone oxidoreductase subunit A (119 aa).

Transmembrane regions (helical) follow at residues 7 to 27 (YPVL…VSIG), 63 to 83 (LVAI…PWGV), and 88 to 108 (IGWP…LGFA).

This sequence belongs to the complex I subunit 3 family. NDH-1 is composed of 14 different subunits. Subunits NuoA, H, J, K, L, M, N constitute the membrane sector of the complex.

The protein resides in the cell inner membrane. It catalyses the reaction a quinone + NADH + 5 H(+)(in) = a quinol + NAD(+) + 4 H(+)(out). In terms of biological role, NDH-1 shuttles electrons from NADH, via FMN and iron-sulfur (Fe-S) centers, to quinones in the respiratory chain. The immediate electron acceptor for the enzyme in this species is believed to be ubiquinone. Couples the redox reaction to proton translocation (for every two electrons transferred, four hydrogen ions are translocated across the cytoplasmic membrane), and thus conserves the redox energy in a proton gradient. This Burkholderia vietnamiensis (strain G4 / LMG 22486) (Burkholderia cepacia (strain R1808)) protein is NADH-quinone oxidoreductase subunit A.